A 236-amino-acid chain; its full sequence is uncharacterized protein (236 aa).

A GP-PDE domain is found at 4–236 (QFLIAYRGYS…VKFQITAQIY (233 aa)).

This sequence to glycerophosphoryl diester phosphodiesterases (EC 3.1.4.46). To M.genitalium MG293.

This is an uncharacterized protein from Mycoplasma genitalium (strain ATCC 33530 / DSM 19775 / NCTC 10195 / G37) (Mycoplasmoides genitalium).